Reading from the N-terminus, the 856-residue chain is DNA mismatch repair protein MutS (856 aa).

607-614 (GPNMSGKS) lines the ATP pocket.

This sequence belongs to the DNA mismatch repair MutS family.

Its function is as follows. This protein is involved in the repair of mismatches in DNA. It is possible that it carries out the mismatch recognition step. This protein has a weak ATPase activity. This chain is DNA mismatch repair protein MutS, found in Lactobacillus delbrueckii subsp. bulgaricus (strain ATCC BAA-365 / Lb-18).